A 414-amino-acid polypeptide reads, in one-letter code: Glutamyl-tRNA reductase (414 aa).

Residues 47-50, serine 106, 111-113, and glutamine 117 each bind substrate; these read TCNR and EAQ. Residue cysteine 48 is the Nucleophile of the active site. 185–190 contributes to the NADP(+) binding site; that stretch reads GAGRTG.

It belongs to the glutamyl-tRNA reductase family. In terms of assembly, homodimer.

The enzyme catalyses (S)-4-amino-5-oxopentanoate + tRNA(Glu) + NADP(+) = L-glutamyl-tRNA(Glu) + NADPH + H(+). The protein operates within porphyrin-containing compound metabolism; protoporphyrin-IX biosynthesis; 5-aminolevulinate from L-glutamyl-tRNA(Glu): step 1/2. Catalyzes the NADPH-dependent reduction of glutamyl-tRNA(Glu) to glutamate 1-semialdehyde (GSA). This is Glutamyl-tRNA reductase from Herpetosiphon aurantiacus (strain ATCC 23779 / DSM 785 / 114-95).